The chain runs to 527 residues: Acid-sensing ion channel 1 (527 aa).

Topologically, residues 1–49 are cytoplasmic; the sequence is MMDLKVDEEEVDSGQPVSIQAFASSSTLHGISHIFSYERLSLKRVVWAL. A helical membrane pass occupies residues 50 to 71; that stretch reads CFMGSLALLALVCTNRIQYYFL. The Extracellular portion of the chain corresponds to 72 to 424; it reads YPHVTKLDEV…NYETIEQKKA (353 aa). 7 disulfide bridges follow: C94–C195, C173–C180, C291–C366, C309–C362, C313–C360, C322–C344, and C324–C336. 2 N-linked (GlcNAc...) asparagine glycosylation sites follow: N367 and N394. The chain crosses the membrane as a discontinuously helical span at residues 425–454; it reads YEVAGLLGDIGGQMGLFIGASILTVLELFD. A GAS motif; ion selectivity filter motif is present at residues 443 to 445; that stretch reads GAS. At 455–527 the chain is on the cytoplasmic side; it reads YAYEVIKHRL…ARGTFEDFTC (73 aa).

Belongs to the amiloride-sensitive sodium channel (TC 1.A.6) family. ASIC1 subfamily. In terms of assembly, homotrimer. Heterotrimer; with other ASIC proteins producing channel with different properties.

The protein localises to the cell membrane. Its subcellular location is the postsynaptic cell membrane. The protein resides in the cell projection. It is found in the dendrite. The catalysed reaction is Na(+)(in) = Na(+)(out). It carries out the reaction Li(+)(in) = Li(+)(out). It catalyses the reaction K(+)(in) = K(+)(out). The enzyme catalyses Ca(2+)(in) = Ca(2+)(out). With respect to regulation, inhibited by the diuretic drug amiloride. Inhibited by Cs(1+) ions. Inhibited by the spider venom psalmotoxin-1; this locks the channel into its desensitized conformation. Channel activity is increased by the heterodimeric snake venom neurotoxin composed of MitTx-alpha and MitTx-beta; this slows channel closure and increases the magnitude of the steady-state current that is triggered by low pH. Forms voltage-independent, pH-gated trimeric sodium channels that act as postsynaptic excitatory receptors in the nervous system, playing a crucial role in regulating synaptic plasticity, learning, and memory. Upon extracellular pH drop this channel elicits transient, fast activating, and completely desensitizing inward currents. Displays high selectivity for sodium ions but can also permit the permeation of other cations. Regulates more or less directly intracellular calcium concentration and CaMKII phosphorylation, and thereby the density of dendritic spines. Modulates neuronal activity in the circuits underlying innate fear. In Gallus gallus (Chicken), this protein is Acid-sensing ion channel 1.